Reading from the N-terminus, the 159-residue chain is Putative UPF0479 protein YDR545C-A (159 aa).

Transmembrane regions (helical) follow at residues 38–58 (IVFC…KVLQ) and 135–155 (VPMI…ISQH).

This sequence belongs to the UPF0479 family.

It is found in the membrane. The polypeptide is Putative UPF0479 protein YDR545C-A (Saccharomyces cerevisiae (strain ATCC 204508 / S288c) (Baker's yeast)).